A 315-amino-acid chain; its full sequence is Probable cell division protein WhiA (315 aa).

A DNA-binding region (H-T-H motif) is located at residues Ser-277–Gln-311.

Belongs to the WhiA family.

In terms of biological role, involved in cell division and chromosome segregation. In Lacticaseibacillus paracasei (strain ATCC 334 / BCRC 17002 / CCUG 31169 / CIP 107868 / KCTC 3260 / NRRL B-441) (Lactobacillus paracasei), this protein is Probable cell division protein WhiA.